Reading from the N-terminus, the 296-residue chain is MMHTVISAVANIWTAPDSPRPSDQFMLQPTVMIRDWLERMTYDERLGLCTDNVIQTQVLFGEKVLVTAEQGEWVSVIVPSQPSRKDPRGYPGWMKKYQLEKTKPIHTQHDVMISKPAAFLYRSNGEKEIELSFLTVLPLIAKENGYFKVSTVFGERFVRQSDAVPVSQQKGTAEDIIQTGAFFLGLPYLWGGISGFGFDCSGFMYSIFKANGYSIPRDAGDQAKAGKGVPLDDMKAGDLLFFAYEEGKGAIHHVGLYVGGGKMLHSPKTGKSIEILTLTETIYEKELCAVRRCFSE.

Substrate is bound by residues Tyr90, 199-201 (DCS), and 218-219 (DA). The 126-residue stretch at 170–295 (KGTAEDIIQT…ELCAVRRCFS (126 aa)) folds into the NlpC/P60 domain. Cys200 functions as the Nucleophile in the catalytic mechanism. The Proton acceptor role is filled by His253. His265 is an active-site residue.

This sequence belongs to the peptidase C40 family.

The enzyme catalyses The enzyme releases L-Ala-gamma-D-Glu dipeptides from cell wall peptides via cleavage of an L-Ala-gamma-D-Glu-|-L-Lys bond.. It functions in the pathway cell wall degradation; peptidoglycan degradation. Specifically hydrolyzes gamma-D-glutamyl-L-lysine bonds in murein peptides, releasing L-Ala-D-Glu. The protein is Gamma-D-glutamyl-L-lysine dipeptidyl-peptidase (ykfC) of Bacillus subtilis (strain 168).